We begin with the raw amino-acid sequence, 526 residues long: Amine oxidase [flavin-containing] A (526 aa).

M1 bears the N-acetylmethionine mark. Over 1–497 (MTDLEKPNLA…HTFLERNLPS (497 aa)) the chain is Cytoplasmic. S383 is modified (phosphoserine). C406 is subject to S-8alpha-FAD cysteine. A helical; Anchor for type IV membrane protein transmembrane segment spans residues 498-518 (VPGLLKITGVSTSVALLCFVL). Residues 519-526 (YKIKKLPC) lie on the Mitochondrial intermembrane side of the membrane. Residues 520–522 (KIK) form an interaction with membrane phospholipid headgroups region.

The protein belongs to the flavin monoamine oxidase family. In terms of assembly, monomer, homo- or heterodimer (containing two subunits of similar size). Each subunit contains a covalently bound flavin. Enzymatically active as monomer. It depends on FAD as a cofactor.

It is found in the mitochondrion outer membrane. The enzyme catalyses a secondary aliphatic amine + O2 + H2O = a primary amine + an aldehyde + H2O2. The catalysed reaction is a primary methyl amine + O2 + H2O = an aldehyde + H2O2 + NH4(+). It catalyses the reaction (R)-adrenaline + O2 + H2O = (R)-3,4-dihydroxymandelaldehyde + methylamine + H2O2. It carries out the reaction dopamine + O2 + H2O = 3,4-dihydroxyphenylacetaldehyde + H2O2 + NH4(+). The enzyme catalyses tyramine + O2 + H2O = (4-hydroxyphenyl)acetaldehyde + H2O2 + NH4(+). The catalysed reaction is (R)-noradrenaline + O2 + H2O = (R)-3,4-dihydroxymandelaldehyde + H2O2 + NH4(+). It catalyses the reaction serotonin + O2 + H2O = (5-hydroxyindol-3-yl)acetaldehyde + H2O2 + NH4(+). It carries out the reaction kynuramine + O2 + H2O = 3-(2-aminophenyl)-3-oxopropanal + H2O2 + NH4(+). The enzyme catalyses tryptamine + O2 + H2O = indole-3-acetaldehyde + H2O2 + NH4(+). The catalysed reaction is 2-phenylethylamine + O2 + H2O = 2-phenylacetaldehyde + H2O2 + NH4(+). Functionally, catalyzes the oxidative deamination of primary and some secondary amine such as neurotransmitters, with concomitant reduction of oxygen to hydrogen peroxide and has important functions in the metabolism of neuroactive and vasoactive amines in the central nervous system and peripheral tissues. Preferentially oxidizes serotonin. Also catalyzes the oxidative deamination of kynuramine to 3-(2-aminophenyl)-3-oxopropanal that can spontaneously condense to 4-hydroxyquinoline. This Rattus norvegicus (Rat) protein is Amine oxidase [flavin-containing] A.